The primary structure comprises 212 residues: Protein-L-isoaspartate O-methyltransferase (212 aa).

The active site involves Ser-60.

The protein belongs to the methyltransferase superfamily. L-isoaspartyl/D-aspartyl protein methyltransferase family.

Its subcellular location is the cytoplasm. The enzyme catalyses [protein]-L-isoaspartate + S-adenosyl-L-methionine = [protein]-L-isoaspartate alpha-methyl ester + S-adenosyl-L-homocysteine. In terms of biological role, catalyzes the methyl esterification of L-isoaspartyl residues in peptides and proteins that result from spontaneous decomposition of normal L-aspartyl and L-asparaginyl residues. It plays a role in the repair and/or degradation of damaged proteins. In Methanococcus maripaludis (strain C5 / ATCC BAA-1333), this protein is Protein-L-isoaspartate O-methyltransferase.